The primary structure comprises 185 residues: Elongation factor P (185 aa).

It belongs to the elongation factor P family.

The protein localises to the cytoplasm. It participates in protein biosynthesis; polypeptide chain elongation. Functionally, involved in peptide bond synthesis. Stimulates efficient translation and peptide-bond synthesis on native or reconstituted 70S ribosomes in vitro. Probably functions indirectly by altering the affinity of the ribosome for aminoacyl-tRNA, thus increasing their reactivity as acceptors for peptidyl transferase. This is Elongation factor P from Mesoplasma florum (strain ATCC 33453 / NBRC 100688 / NCTC 11704 / L1) (Acholeplasma florum).